A 311-amino-acid chain; its full sequence is Delta-1-pyrroline-5-carboxylate reductase kk1I (311 aa).

The signal sequence occupies residues 1–31 (MTKRESNTLAVLGCGMVFLVSLLDLANRLLG). A glycan (N-linked (GlcNAc...) asparagine) is linked at Asn59.

The protein belongs to the pyrroline-5-carboxylate reductase family.

It participates in secondary metabolite biosynthesis. Its function is as follows. Delta-1-pyrroline-5-carboxylate reductase; part of the gene cluster that mediates the biosynthesis of KK-1, a novel cyclic depsipeptide with 10 residues which is a promising active compound with high activity against many plant pathogens, especially Botrytis cinerea. Within the pathway, kk1I catalyzes the synthesis of the L-pipecolic acid residue of KK-1 from delta-1-pyrroline-5-carboxylate (P5C), a metabolic intermediate of lysine. The nonribosomal peptide synthetase (NRPS) kk1B catalyzes the elongation and cyclization of the decapeptide chain composed of 1 D-lactic acid residue (D-Lac), 1 pipecolic acid residue (Pip), 1 aspartic acid residue (Asp), 1 isoleucine residue (Ile), 1 glycine residue (Gly), 1 tyrosine residue (Tyr) and 4 valine residues (Val). The Asp, Ile and 3 Val residues are N-methylated by the 5 methyltransferase domains from the NRPS (found in modules 3, 5, 6, 7 and 9), whereas the Tyr residue is O-methylated by the cluster encoded O-methyltransferase kk1A. The thioesterase kk1J is likely to be involved in the corrective mechanism of peptide chain synthesis. The D-lactate dehydrogenase kk1H is involved in the synthesis of D-lactic acid from pyruvic acid, which is recognized by the A domain of the first kk1B module. The pyrroline-5-carboxylate reductase kk1I is involved in the synthesis of the L-pipecolic acid residue of KK-1 from delta-1-pyrroline-5-carboxylate (P5C), a metabolic intermediate of lysine. It still is unclear how kk1C and kk1D are involved in the production of KK-1. The chain is Delta-1-pyrroline-5-carboxylate reductase kk1I from Curvularia clavata.